We begin with the raw amino-acid sequence, 256 residues long: Imidazole glycerol phosphate synthase subunit HisF (256 aa).

Catalysis depends on residues aspartate 11 and aspartate 130.

Belongs to the HisA/HisF family. Heterodimer of HisH and HisF.

It is found in the cytoplasm. The catalysed reaction is 5-[(5-phospho-1-deoxy-D-ribulos-1-ylimino)methylamino]-1-(5-phospho-beta-D-ribosyl)imidazole-4-carboxamide + L-glutamine = D-erythro-1-(imidazol-4-yl)glycerol 3-phosphate + 5-amino-1-(5-phospho-beta-D-ribosyl)imidazole-4-carboxamide + L-glutamate + H(+). It functions in the pathway amino-acid biosynthesis; L-histidine biosynthesis; L-histidine from 5-phospho-alpha-D-ribose 1-diphosphate: step 5/9. In terms of biological role, IGPS catalyzes the conversion of PRFAR and glutamine to IGP, AICAR and glutamate. The HisF subunit catalyzes the cyclization activity that produces IGP and AICAR from PRFAR using the ammonia provided by the HisH subunit. In Cupriavidus taiwanensis (strain DSM 17343 / BCRC 17206 / CCUG 44338 / CIP 107171 / LMG 19424 / R1) (Ralstonia taiwanensis (strain LMG 19424)), this protein is Imidazole glycerol phosphate synthase subunit HisF.